The chain runs to 300 residues: Movement protein (300 aa).

It belongs to the alfamovirus movement protein family.

The protein resides in the host cell junction. It localises to the host plasmodesma. Functionally, transports viral genome to neighboring plant cells directly through plasmosdesmata, without any budding. The movement protein allows efficient cell to cell propagation, by bypassing the host cell wall barrier. Acts by forming a tubular structure at the host plasmodesmata, enlarging it enough to allow free passage of virion capsids. The sequence is that of Movement protein from Alfalfa mosaic virus (AMV).